We begin with the raw amino-acid sequence, 142 residues long: Large ribosomal subunit protein uL13 (142 aa).

The protein belongs to the universal ribosomal protein uL13 family. Part of the 50S ribosomal subunit.

In terms of biological role, this protein is one of the early assembly proteins of the 50S ribosomal subunit, although it is not seen to bind rRNA by itself. It is important during the early stages of 50S assembly. The sequence is that of Large ribosomal subunit protein uL13 from Herminiimonas arsenicoxydans.